A 137-amino-acid chain; its full sequence is ATP synthase epsilon chain (137 aa).

Belongs to the ATPase epsilon chain family. In terms of assembly, F-type ATPases have 2 components, CF(1) - the catalytic core - and CF(0) - the membrane proton channel. CF(1) has five subunits: alpha(3), beta(3), gamma(1), delta(1), epsilon(1). CF(0) has three main subunits: a, b and c.

It is found in the cell inner membrane. Produces ATP from ADP in the presence of a proton gradient across the membrane. The protein is ATP synthase epsilon chain of Ruegeria sp. (strain TM1040) (Silicibacter sp.).